The chain runs to 215 residues: Nascent polypeptide-associated complex subunit alpha (215 aa).

The tract at residues 1 to 81 is disordered; it reads MPGEATETVP…SEKKARKAMS (81 aa). Polar residues predominate over residues 9-28; that stretch reads VPATEQELPQPQAETGSGTE. A compositionally biased stretch (acidic residues) spans 29-42; that stretch reads SDSDESVPELEEQD. Position 43 is a phosphoserine; by ILK1 (S43). Residues 44–57 are compositionally biased toward low complexity; that stretch reads TQTATQQAQLAAAA. A required for DNA-binding region spans residues 69–80; that stretch reads QSRSEKKARKAM. The 66-residue stretch at 70–135 folds into the NAC-A/B domain; it reads SRSEKKARKA…AKIEDLSQQA (66 aa). The interval 93-108 is RNA/DNA-binding; sequence RVTIRKSKNILFVITK. S132 bears the Phosphoserine mark. K142 is subject to N6-acetyllysine; alternate. Residue K142 forms a Glycyl lysine isopeptide (Lys-Gly) (interchain with G-Cter in SUMO2); alternate linkage. T159 bears the Phosphothreonine; by GSK3-beta mark. At T161 the chain carries Phosphothreonine. A phosphoserine mark is found at S166, S186, S191, and S203. The region spanning 176–213 is the UBA domain; it reads VEVKDIELVMSQANVSRAKAVRALKNNSNDIVNAIMEL.

This sequence belongs to the NAC-alpha family. In terms of assembly, part of the nascent polypeptide-associated complex (NAC), which is a heterodimer of NACA and BTF3 (via NAC-A/B domains). NAC associates with ribosomes through the BTF3/NACB subunit and contacts the ribosomal protein L23, which is positioned near the exiting site. Both subunits can contact nascent polypeptide chains. NACA may also form homodimers, and only this form binds DNA. Interacts with TBP and JUN. Post-translationally, phosphorylation of Ser-43 by ILK during cell adhesion may promote nuclear localization. Phosphorylation of Thr-159 by GSK3B may promote proteasome mediated degradation. In terms of tissue distribution, isoform 1 appears to be ubiquitously expressed.

The protein resides in the cytoplasm. It localises to the nucleus. Prevents inappropriate targeting of non-secretory polypeptides to the endoplasmic reticulum (ER). Binds to nascent polypeptide chains as they emerge from the ribosome and blocks their interaction with the signal recognition particle (SRP), which normally targets nascent secretory peptides to the ER. Also reduces the inherent affinity of ribosomes for protein translocation sites in the ER membrane (M sites). Isoform 1 and isoform 2 appear to bind DNA and play roles in transcription. Isoform 1 may function as a specific coactivator for JUN, acting to stabilize the interaction of JUN homodimers with promoter elements. This Mus musculus (Mouse) protein is Nascent polypeptide-associated complex subunit alpha (Naca).